A 144-amino-acid chain; its full sequence is MSLHSLCVPTILLISVLSICLSSGGSSDSKLHRILIKRDAKEIESRPKAYISVQQSKAKEFLSGLHRTKRNVWDRSRPDVQQWIQQFMYMGYDEARLETDLSYWMDQARSNDQGRQHHHDENAPMSQQDPRYNRHGANVNYDYY.

Residues 1-18 (MSLHSLCVPTILLISVLS) form the signal peptide. A propeptide spanning residues 19-68 (ICLSSGGSSDSKLHRILIKRDAKEIESRPKAYISVQQSKAKEFLSGLHRT) is cleaved from the precursor. Residues 109 to 144 (RSNDQGRQHHHDENAPMSQQDPRYNRHGANVNYDYY) form a disordered region. The segment covering 112–122 (DQGRQHHHDEN) has biased composition (basic and acidic residues).

It belongs to the augurin family.

The protein localises to the secreted. It localises to the cytoplasm. The protein resides in the apical cell membrane. Functionally, probable hormone. Required for the proper formation of the central nervous system by attenuating cell proliferation during development. The protein is Augurin-B of Danio rerio (Zebrafish).